The following is an 858-amino-acid chain: Taste receptor type 1 member 3 (858 aa).

The first 20 residues, 1-20 (MPGLAILGLSLAAFLELGMG), serve as a signal peptide directing secretion. Residues 21-575 (SSLCLSQQFK…FLAWGEPAVL (555 aa)) are Extracellular-facing. Asn-85, Asn-130, Asn-203, Asn-264, Asn-379, Asn-387, Asn-418, Asn-439, and Asn-482 each carry an N-linked (GlcNAc...) asparagine glycan. Residues 576–596 (SLLLLLCLVLGLTLAALGLFV) traverse the membrane as a helical segment. Topologically, residues 597–610 (HYWDSPLVQASGGS) are cytoplasmic. Residues 611 to 631 (LFCFGLICLGLFCLSVLLFPG) traverse the membrane as a helical segment. The Extracellular portion of the chain corresponds to 632-644 (RPRSASCLAQQPM). A helical membrane pass occupies residues 645–665 (AHLPLTGCLSTLFLQAAEIFV). The Cytoplasmic portion of the chain corresponds to 666-687 (ESELPLSWANWLCSYLRGPWAW). A helical membrane pass occupies residues 688–708 (LVVLLATLVEAALCAWYLMAF). Topologically, residues 709–735 (PPEVVTDWQVLPTEVLEHCRMRSWVSL) are extracellular. The helical transmembrane segment at 736 to 756 (GLVHITNAVLAFLCFLGTFLV) threads the bilayer. Topologically, residues 757–767 (QSQPGRYNRAR) are cytoplasmic. The helical transmembrane segment at 768 to 788 (GLTFAMLAYFIIWVSFVPLLA) threads the bilayer. Residues 789 to 796 (NVQVAYQP) lie on the Extracellular side of the membrane. Residues 797 to 817 (AVQMGAILFCALGILATFHLP) form a helical membrane-spanning segment. Residues 818-858 (KCYVLLWLPELNTQEFFLGRSPKEASDGNSGSSEATRGHSE) are Cytoplasmic-facing. The disordered stretch occupies residues 839-858 (PKEASDGNSGSSEATRGHSE).

Belongs to the G-protein coupled receptor 3 family. TAS1R subfamily. In terms of assembly, forms homodimers or heterodimers with TAS1R1 and TAS1R2.

The protein resides in the cell membrane. Its function is as follows. Putative taste receptor. TAS1R1/TAS1R3 responds to the umami taste stimulus (the taste of monosodium glutamate) and also to most of the 20 standard L-amino acids, but not to their D-enantiomers or other compounds. TAS1R2/TAS1R3 recognizes diverse natural and synthetic sweeteners. TAS1R3 is essential for the recognition and response to the disaccharide trehalose. Sequence differences within and between species can significantly influence the selectivity and specificity of taste responses. The polypeptide is Taste receptor type 1 member 3 (Tas1r3) (Rattus norvegicus (Rat)).